We begin with the raw amino-acid sequence, 273 residues long: NH(3)-dependent NAD(+) synthetase (273 aa).

47 to 54 (GISGGQDS) is a binding site for ATP. Aspartate 53 provides a ligand contact to Mg(2+). Position 139 (arginine 139) interacts with deamido-NAD(+). Position 159 (threonine 159) interacts with ATP. Mg(2+) is bound at residue glutamate 164. 2 residues coordinate deamido-NAD(+): lysine 172 and aspartate 179. ATP is bound by residues lysine 188 and threonine 210. A deamido-NAD(+)-binding site is contributed by 259–260 (HK).

The protein belongs to the NAD synthetase family. As to quaternary structure, homodimer.

It carries out the reaction deamido-NAD(+) + NH4(+) + ATP = AMP + diphosphate + NAD(+) + H(+). It participates in cofactor biosynthesis; NAD(+) biosynthesis; NAD(+) from deamido-NAD(+) (ammonia route): step 1/1. Catalyzes the ATP-dependent amidation of deamido-NAD to form NAD. Uses ammonia as a nitrogen source. The polypeptide is NH(3)-dependent NAD(+) synthetase (Staphylococcus aureus (strain N315)).